The chain runs to 108 residues: UPF0060 membrane protein Nwi_1459 (108 aa).

A run of 4 helical transmembrane segments spans residues 5-25 (AAYV…WAWL), 31-51 (VWWL…LTLV), 61-81 (AAYG…VEGI), and 88-108 (LAGA…PHEI).

It belongs to the UPF0060 family.

The protein resides in the cell inner membrane. In Nitrobacter winogradskyi (strain ATCC 25391 / DSM 10237 / CIP 104748 / NCIMB 11846 / Nb-255), this protein is UPF0060 membrane protein Nwi_1459.